Reading from the N-terminus, the 1357-residue chain is DNA-directed RNA polymerase subunit beta (1357 aa).

This sequence belongs to the RNA polymerase beta chain family. The RNAP catalytic core consists of 2 alpha, 1 beta, 1 beta' and 1 omega subunit. When a sigma factor is associated with the core the holoenzyme is formed, which can initiate transcription.

It carries out the reaction RNA(n) + a ribonucleoside 5'-triphosphate = RNA(n+1) + diphosphate. Functionally, DNA-dependent RNA polymerase catalyzes the transcription of DNA into RNA using the four ribonucleoside triphosphates as substrates. The protein is DNA-directed RNA polymerase subunit beta of Pseudomonas aeruginosa (strain ATCC 15692 / DSM 22644 / CIP 104116 / JCM 14847 / LMG 12228 / 1C / PRS 101 / PAO1).